The chain runs to 135 residues: Glutaredoxin-C5 (135 aa).

One can recognise a Glutaredoxin domain in the interval 29-134; sequence AERVERLASE…PLLKEAGALW (106 aa). Cysteines 49 and 52 form a disulfide. A Responsive for interaction with TGA factors motif is present at residues 132-135; the sequence is ALWL.

It belongs to the glutaredoxin family. CC-type subfamily.

The protein localises to the cytoplasm. Its subcellular location is the nucleus. Functionally, has a glutathione-disulfide oxidoreductase activity in the presence of NADPH and glutathione reductase. Reduces low molecular weight disulfides and proteins. This Oryza sativa subsp. japonica (Rice) protein is Glutaredoxin-C5 (GRXC5).